We begin with the raw amino-acid sequence, 916 residues long: Translation initiation factor IF-2 (916 aa).

Positions Leu-58 to Gly-317 are disordered. A compositionally biased stretch (low complexity) spans Glu-120–Lys-142. Over residues Ser-195–Gly-206 the composition is skewed to pro residues. Gly residues-rich tracts occupy residues Arg-214–Pro-227 and Ser-235–Gly-282. Positions Gly-283 to Lys-294 are enriched in basic residues. The tr-type G domain maps to Ile-409 to Arg-583. The interval Gly-418 to Thr-425 is G1. Gly-418 to Thr-425 lines the GTP pocket. The tract at residues Gly-443–His-447 is G2. The segment at Asp-468–Gly-471 is G3. Residues Asp-468–His-472 and Asn-522–Asp-525 contribute to the GTP site. A G4 region spans residues Asn-522–Asp-525. The interval Ser-558–Arg-560 is G5.

The protein belongs to the TRAFAC class translation factor GTPase superfamily. Classic translation factor GTPase family. IF-2 subfamily.

Its subcellular location is the cytoplasm. One of the essential components for the initiation of protein synthesis. Protects formylmethionyl-tRNA from spontaneous hydrolysis and promotes its binding to the 30S ribosomal subunits. Also involved in the hydrolysis of GTP during the formation of the 70S ribosomal complex. The polypeptide is Translation initiation factor IF-2 (Leifsonia xyli subsp. xyli (strain CTCB07)).